The chain runs to 183 residues: MSQPAKVLLLYAHPESQDSVANWVLLKPATQLSNVTVHDLYAHYPDFFIDIPREQALLREHEVIVFQHPLYTYSCPALLKEWLDRVLSRGFASGPGGNQLAGKYWRSVITTGEPESAYRYDALNRYPMSDVLRPFELAAGMCRMHWLSPIIIYWARRQSAQELASHARAYGDWLANPLSPGGC.

The protein belongs to the NAD(P)H dehydrogenase (quinone) family. KefG subfamily. In terms of assembly, interacts with KefB.

Its subcellular location is the cell inner membrane. The enzyme catalyses a quinone + NADH + H(+) = a quinol + NAD(+). It carries out the reaction a quinone + NADPH + H(+) = a quinol + NADP(+). Its function is as follows. Regulatory subunit of a potassium efflux system that confers protection against electrophiles. Required for full activity of KefB. In Escherichia coli O6:K15:H31 (strain 536 / UPEC), this protein is Glutathione-regulated potassium-efflux system ancillary protein KefG.